A 108-amino-acid chain; its full sequence is NADH dehydrogenase [ubiquinone] flavoprotein 3, mitochondrial (108 aa).

The N-terminal 34 residues, 1-34, are a transit peptide targeting the mitochondrion; sequence MAASCLLRQGRAGALKTMLQEAQVFRGLASTVSL. Positions 33–72 are disordered; that stretch reads SLSAESGKSEKGQPQNSKKQSPPKKPAPVPAEPFDNSTYK. Ser-105 carries the phosphoserine modification.

Belongs to the complex I NDUFV3 subunit family. Complex I is composed of 45 different subunits. This is a component of the flavoprotein-sulfur (FP) fragment of the enzyme.

The protein localises to the mitochondrion inner membrane. Its function is as follows. Accessory subunit of the mitochondrial membrane respiratory chain NADH dehydrogenase (Complex I), that is believed not to be involved in catalysis. Complex I functions in the transfer of electrons from NADH to the respiratory chain. The immediate electron acceptor for the enzyme is believed to be ubiquinone. May be the terminally assembled subunit of Complex I. This is NADH dehydrogenase [ubiquinone] flavoprotein 3, mitochondrial (NDUFV3) from Gorilla gorilla gorilla (Western lowland gorilla).